The sequence spans 1992 residues: Fer-1-like protein 4 (1992 aa).

C2 domains lie at 1 to 97 (MALT…VLRE), 214 to 330 (PRGD…QKWA), and 369 to 502 (TSSD…AGFN). Topologically, residues 1-1952 (MALTVCVRHL…PLKTFIFFIW (1952 aa)) are extracellular. 3 disordered regions span residues 554-606 (RVEP…APEI), 661-686 (AGRQEEQSGQGSRADEGSESSTLEVQ), and 691-710 (SEDRGAGQEEQELLGTPAQW). Residues 559–569 (PSQTTQRSGLS) show a composition bias toward polar residues. A compositionally biased stretch (basic residues) spans 572 to 581 (TGKKKKKKEK). C2 domains are found at residues 951 to 1078 (PSSG…ELQF) and 1126 to 1250 (ISGH…PQEE). 2 disordered regions span residues 1245 to 1276 (EDPQEEEETEEETRDLVPHGPQGEKSLPEAGT) and 1322 to 1361 (FQGQPSSDDEMDEAGDADGTHLISGDREAQEQGETDSKVS). 2 stretches are compositionally biased toward acidic residues: residues 1247–1257 (PQEEEETEEET) and 1328–1337 (SDDEMDEAGD). C2 domains are found at residues 1430–1549 (SFSE…ANCG) and 1675–1824 (VPAP…EHCS). 8 residues coordinate Ca(2+): D1464, D1470, D1519, D1521, D1527, D1795, S1798, and D1801. The tract at residues 1862–1885 (EAREAQAGKKRKRKRRAGRPEDLE) is disordered. Basic residues predominate over residues 1869–1878 (GKKRKRKRRA). A helical transmembrane segment spans residues 1953-1973 (RRYWRILVLLLLALITIFLLL). At 1974–1992 (VFYTIPGQISEVIFSPVHK) the chain is on the cytoplasmic side.

Ca(2+) is required as a cofactor.

It is found in the membrane. This is Fer-1-like protein 4 (Fer1l4) from Mus musculus (Mouse).